The chain runs to 359 residues: Protein PAM71-homolog, chloroplastic (359 aa).

The transit peptide at 1 to 66 (MKLTSLSKNA…DLLWGKFRVR (66 aa)) directs the protein to the chloroplast. The interval 71–102 (GVGSGSYSGGEEDGSQSSSLDQSPATSSESLK) is disordered. Over residues 85 to 98 (SQSSSLDQSPATSS) the composition is skewed to low complexity. 7 helical membrane-spanning segments follow: residues 110–130 (SLSI…ITFV), 149–169 (AFSL…AALL), 177–197 (LVLL…VVIG), 207–227 (FQTT…FFGL), 269–289 (LTNP…AEWG), 311–331 (GAIA…AFLA), and 339–359 (VGYV…FGVF).

Belongs to the GDT1 family.

It is found in the plastid. Its subcellular location is the chloroplast membrane. Its function is as follows. Probable chloroplast-localized Mn(2+)/H(+) and/or Ca(2+)/H(+) antiporter regulating Ca(2+), Mn(2+) and pH homeostasis. The protein is Protein PAM71-homolog, chloroplastic of Arabidopsis thaliana (Mouse-ear cress).